A 1190-amino-acid chain; its full sequence is Phosphatidylinositol 3,4,5-trisphosphate 5-phosphatase 1 (1190 aa).

In terms of domain architecture, SH2 spans 8–104 (WNHGNITRSK…GLVTHLQFPV (97 aa)). The span at 111 to 120 (AIDEPEEDTE) shows a compositional bias: acidic residues. Positions 111-130 (AIDEPEEDTESVMSPPELPP) are disordered. The short motif at 126–131 (PELPPR) is the SH3-binding 1 element. Ser-245 is subject to Phosphoserine. Residues 914–917 (NPNY) carry the NPXY motif 1 motif. Tyr-917 carries the post-translational modification Phosphotyrosine. Ser-934 carries the phosphoserine modification. Tyr-944 is modified (phosphotyrosine). A disordered region spans residues 946–1190 (QLPKDSSLGP…ESLLGRTAMQ (245 aa)). The segment covering 961–971 (PPTPPSQPPLS) has biased composition (pro residues). Thr-963 is subject to Phosphothreonine. Phosphoserine is present on residues Ser-966 and Ser-971. Positions 969–974 (PLSPKK) match the SH3-binding 2 motif. The span at 989-998 (QETRPGDLGK) shows a compositional bias: basic and acidic residues. The segment at 1014-1028 (MFENPLYGSVSPFPK) is interaction with DAB2. Residues 1017 to 1020 (NPLY) carry the NPXY motif 2 motif. The residue at position 1020 (Tyr-1020) is a Phosphotyrosine. The span at 1031-1045 (PRKEQESPKMMRKEP) shows a compositional bias: basic and acidic residues. The short motif at 1038–1049 (PKMMRKEPPPCP) is the SH3-binding 3 element. The span at 1140–1149 (IPAPRPPLPV) shows a compositional bias: pro residues. A compositionally biased stretch (basic and acidic residues) spans 1161 to 1183 (KGRDYRDNTELPHHGKHRQEESL).

It belongs to the inositol 1,4,5-trisphosphate 5-phosphatase family. As to quaternary structure, interacts with tyrosine phosphorylated forms of SHC1. Interacts with tyrosine phosphorylated form of DOK1. Interacts with tyrosine phosphorylated form of DOK3. Interacts with tyrosine phosphorylated form of SLAMF1/CD150. Interacts with PTPN11/SHP-2 in response to IL-3. Interacts with receptor EPOR. Interacts with receptors MS4A2/FCER1B and FCER1G. Interacts with receptors FCGR2B and FCGR3. Interacts with receptor FCGR2A, leading to regulate gene expression during the phagocytic process. Interacts with GRB2. Interacts with PLCG1. Interacts with tyrosine kinases SRC and TEC. Interacts with c-Met/MET. Interacts with MILR1 (tyrosine-phosphorylated). Can weakly interact (via NPXY motif 2) with DAB2 (via PID domain); the interaction is impaired by tyrosine phosphorylation of the NPXY motif. Interacts (via SH2 domain) with tyrosine phosphorylated KLRC1 (via ITIM). Interacts with MPL/TPOR. Post-translationally, tyrosine phosphorylated by the members of the SRC family after exposure to a diverse array of extracellular stimuli such as cytokines, growth factors, antibodies, chemokines, integrin ligands and hypertonic and oxidative stress. Phosphorylated upon IgG receptor FCGR2B-binding.

The protein resides in the cytoplasm. It is found in the cell membrane. Its subcellular location is the membrane raft. The protein localises to the cytoskeleton. The catalysed reaction is a 1,2-diacyl-sn-glycero-3-phospho-(1D-myo-inositol-3,4,5-trisphosphate) + H2O = a 1,2-diacyl-sn-glycero-3-phospho-(1D-myo-inositol-3,4-bisphosphate) + phosphate. The enzyme catalyses 1D-myo-inositol 1,3,4,5-tetrakisphosphate + H2O = 1D-myo-inositol 1,3,4-trisphosphate + phosphate. It catalyses the reaction a 1,2-diacyl-sn-glycero-3-phospho-(1D-myo-inositol-4,5-bisphosphate) + H2O = a 1,2-diacyl-sn-glycero-3-phospho-(1D-myo-inositol 4-phosphate) + phosphate. With respect to regulation, activated upon translocation to the sites of synthesis of PtdIns(3,4,5)P3 in the membrane. Functionally, phosphatidylinositol (PtdIns) phosphatase that specifically hydrolyzes the 5-phosphate of phosphatidylinositol-3,4,5-trisphosphate (PtdIns(3,4,5)P3) to produce PtdIns(3,4)P2, thereby negatively regulating the PI3K (phosphoinositide 3-kinase) pathways. Also able to hydrolyze the 5-phosphate of phosphatidylinositol-4,5-bisphosphate (PtdIns(4,5)P3) and inositol 1,3,4,5-tetrakisphosphate. Acts as a negative regulator of B-cell antigen receptor signaling. Mediates signaling from the FC-gamma-RIIB receptor (FCGR2B), playing a central role in terminating signal transduction from activating immune/hematopoietic cell receptor systems. Acts as a negative regulator of myeloid cell proliferation/survival and chemotaxis, mast cell degranulation, immune cells homeostasis, integrin alpha-IIb/beta-3 signaling in platelets and JNK signaling in B-cells. Regulates proliferation of osteoclast precursors, macrophage programming, phagocytosis and activation and is required for endotoxin tolerance. Involved in the control of cell-cell junctions, CD32a signaling in neutrophils and modulation of EGF-induced phospholipase C activity. Key regulator of neutrophil migration, by governing the formation of the leading edge and polarization required for chemotaxis. Modulates FCGR3/CD16-mediated cytotoxicity in NK cells. Mediates the activin/TGF-beta-induced apoptosis through its Smad-dependent expression. In Rattus norvegicus (Rat), this protein is Phosphatidylinositol 3,4,5-trisphosphate 5-phosphatase 1 (Inpp5d).